A 786-amino-acid chain; its full sequence is Elastin (786 aa).

The N-terminal stretch at 1–26 is a signal peptide; the sequence is MAGLTAAAPRPGVLLLLLSILHPSRP. At proline 34 the chain carries Hydroxyproline. Hydroxyproline; partial occurs at positions 65, 67, and 88. Residues lysine 104 and lysine 107 each carry the allysine modification. Proline 116 carries the post-translational modification 4-hydroxyproline; partial. 4 positions are modified to hydroxyproline; partial: proline 156, proline 167, proline 170, and proline 177. Proline 190 bears the 4-hydroxyproline; partial mark. Allysine is present on residues lysine 241, lysine 261, and lysine 265. 2 positions are modified to 4-hydroxyproline; partial: proline 283 and proline 286. A Hydroxyproline; partial modification is found at proline 290. Lysine 312 and lysine 315 each carry allysine. Residues proline 327, proline 342, and proline 347 each carry the 4-hydroxyproline; partial modification. 2 positions are modified to hydroxyproline; partial: proline 352 and proline 355. Proline 360 is modified (4-hydroxyproline; partial). Residues lysine 375, lysine 379, and lysine 382 each carry the allysine modification. Proline 415 carries the 4-hydroxyproline; partial modification. Proline 421 carries the post-translational modification Hydroxyproline; partial. At proline 427 the chain carries 4-hydroxyproline; partial. An allysine mark is found at lysine 448 and lysine 451. Proline 465 carries the post-translational modification Hydroxyproline; partial. Proline 481 is subject to 4-hydroxyproline; partial. Residues lysine 492 and lysine 496 each carry the allysine modification. Hydroxyproline; partial occurs at positions 522 and 550. Lysine 558, lysine 562, and lysine 566 each carry allysine. Residue proline 580 is modified to 4-hydroxyproline; partial. 2 positions are modified to 4-hydroxyproline: proline 589 and proline 598. Proline 607 is subject to 4-hydroxyproline; partial. The interval 615–645 is disordered; that stretch reads EGVRRSLSPELREGDPSSSQHLPSTPSSPRV. The span at 630 to 645 shows a compositional bias: low complexity; the sequence is PSSSQHLPSTPSSPRV. At proline 646 the chain carries Hydroxyproline; partial. Lysine 653 and lysine 656 each carry allysine. Proline 677 carries the 4-hydroxyproline; partial modification. Allysine occurs at positions 693, 697, 735, and 738. A hydroxyproline; partial mark is found at proline 769 and proline 772. A disulfide bridge connects residues cysteine 776 and cysteine 781.

It belongs to the elastin family. The polymeric elastin chains are cross-linked together into an extensible 3D network. Forms a ternary complex with BGN and MFAP2. Interacts with MFAP2 via divalent cations (calcium &gt; magnesium &gt; manganese) in a dose-dependent and saturating manner. Interacts with FBLN5. Interacts with FBN1. Forms a ternary complex with FBN1 and FBLN2 or FBLN5. Interacts with MFAP4 in a Ca (2+)-dependent manner; this interaction promotes ELN self-assembly. Interacts with EFEMP2 with moderate affinity. In terms of processing, elastin is formed through the cross-linking of its soluble precursor tropoelastin. Cross-linking is initiated through the action of lysyl oxidase on exposed lysines to form allysine. Subsequent spontaneous condensation reactions with other allysine or unmodified lysine residues result in various bi-, tri-, and tetrafunctional cross-links. The most abundant cross-links in mature elastin fibers are lysinonorleucine, allysine aldol, desmosine, and isodesmosine. Hydroxylation on proline residues within the sequence motif, GXPG, is most likely 4-hydroxy as this fits the requirement for 4-hydroxylation in vertebrates. As to expression, expressed within the outer myometrial smooth muscle and throughout the arteriolar tree of uterus (at protein level). Also expressed in the large arteries, lung and skin.

The protein localises to the secreted. It is found in the extracellular space. The protein resides in the extracellular matrix. Major structural protein of tissues such as aorta and nuchal ligament, which must expand rapidly and recover completely. Molecular determinant of the late arterial morphogenesis, stabilizing arterial structure by regulating proliferation and organization of vascular smooth muscle. This chain is Elastin (ELN), found in Homo sapiens (Human).